A 994-amino-acid chain; its full sequence is Alanine--tRNA ligase, chloroplastic/mitochondrial (994 aa).

The interval Met1 to Ser29 is disordered. Positions 672, 676, 774, and 778 each coordinate Zn(2+).

This sequence belongs to the class-II aminoacyl-tRNA synthetase family. In terms of assembly, monomer. Zn(2+) serves as cofactor.

Its subcellular location is the plastid. It is found in the chloroplast. The protein resides in the mitochondrion. It carries out the reaction tRNA(Ala) + L-alanine + ATP = L-alanyl-tRNA(Ala) + AMP + diphosphate. Catalyzes the attachment of alanine to tRNA(Ala) in a two-step reaction: alanine is first activated by ATP to form Ala-AMP and then transferred to the acceptor end of tRNA(Ala). Also edits incorrectly charged tRNA(Ala) via its editing domain. The protein is Alanine--tRNA ligase, chloroplastic/mitochondrial of Populus trichocarpa (Western balsam poplar).